Consider the following 1409-residue polypeptide: DNA-directed RNA polymerase subunit beta' (1409 aa).

4 residues coordinate Zn(2+): C72, C74, C87, and C90. 3 residues coordinate Mg(2+): D462, D464, and D466. Zn(2+) contacts are provided by C816, C890, C897, and C900.

It belongs to the RNA polymerase beta' chain family. The RNAP catalytic core consists of 2 alpha, 1 beta, 1 beta' and 1 omega subunit. When a sigma factor is associated with the core the holoenzyme is formed, which can initiate transcription. Mg(2+) serves as cofactor. The cofactor is Zn(2+).

The enzyme catalyses RNA(n) + a ribonucleoside 5'-triphosphate = RNA(n+1) + diphosphate. In terms of biological role, DNA-dependent RNA polymerase catalyzes the transcription of DNA into RNA using the four ribonucleoside triphosphates as substrates. This Aromatoleum aromaticum (strain DSM 19018 / LMG 30748 / EbN1) (Azoarcus sp. (strain EbN1)) protein is DNA-directed RNA polymerase subunit beta'.